A 525-amino-acid polypeptide reads, in one-letter code: Probable protein kinase UbiB (525 aa).

Positions D118–G500 constitute a Protein kinase domain. Residues V124–V132 and K150 contribute to the ATP site. The active-site Proton acceptor is the D285. A helical membrane pass occupies residues L501–L521.

The protein belongs to the ABC1 family. UbiB subfamily.

Its subcellular location is the cell inner membrane. It participates in cofactor biosynthesis; ubiquinone biosynthesis [regulation]. Functionally, is probably a protein kinase regulator of UbiI activity which is involved in aerobic coenzyme Q (ubiquinone) biosynthesis. This is Probable protein kinase UbiB from Paraburkholderia phytofirmans (strain DSM 17436 / LMG 22146 / PsJN) (Burkholderia phytofirmans).